The sequence spans 61 residues: Large ribosomal subunit protein uL29 (61 aa).

The protein belongs to the universal ribosomal protein uL29 family.

This Xanthomonas euvesicatoria pv. vesicatoria (strain 85-10) (Xanthomonas campestris pv. vesicatoria) protein is Large ribosomal subunit protein uL29.